The following is a 326-amino-acid chain: Heat-inducible transcription repressor HrcA (326 aa).

Belongs to the HrcA family.

Its function is as follows. Negative regulator of class I heat shock genes (grpE-dnaK-dnaJ and groELS operons). Prevents heat-shock induction of these operons. In Staphylococcus saprophyticus subsp. saprophyticus (strain ATCC 15305 / DSM 20229 / NCIMB 8711 / NCTC 7292 / S-41), this protein is Heat-inducible transcription repressor HrcA.